The sequence spans 164 residues: Phosphopantetheine adenylyltransferase (164 aa).

Residue Ser11 participates in substrate binding. ATP is bound by residues 11–12 (SF) and His19. Substrate is bound by residues Lys43, Ala76, and Arg90. Residues 91–93 (GLR), Glu101, and 126–132 (YQHISSS) each bind ATP.

It belongs to the bacterial CoaD family. Homohexamer. Mg(2+) serves as cofactor.

It is found in the cytoplasm. The enzyme catalyses (R)-4'-phosphopantetheine + ATP + H(+) = 3'-dephospho-CoA + diphosphate. The protein operates within cofactor biosynthesis; coenzyme A biosynthesis; CoA from (R)-pantothenate: step 4/5. In terms of biological role, reversibly transfers an adenylyl group from ATP to 4'-phosphopantetheine, yielding dephospho-CoA (dPCoA) and pyrophosphate. This Streptococcus sanguinis (strain SK36) protein is Phosphopantetheine adenylyltransferase.